The following is a 361-amino-acid chain: MHISTIKTAGSSGMSHMNEAYSSTTATEMVARGAGSEIIHTEIDSNGSKELAPNGAQSRVQKPSEDAVRAPYDYIRTLPSKRIRETFIDALDSWLAVPAGSSTSIKSIIGMLHQSSLMLDDIEDDSTLRRGKPTAHTLFGTAQTINSANWVFVCAFEELRQLRGVDAATVFVEELKNLHCGQALDLHWKHHTYIPSVDEYLNMVDHKTGGLFRLCVRLMQGESSTSCHHIDAERFITLLGRYFQIRDDYQNLVSDEYTNQKGFCEDLDEGKISLPLIYCLAGSDPTQIMIKGILQHKRTGEMPLSMKKLILEKMRSGGALNATISLLKDLQDDILEELKSLELAFGSGNPMLELVLRRLWI.

Positions 44-63 (DSNGSKELAPNGAQSRVQKP) are disordered. Lys-81, Arg-84, and His-113 together coordinate isopentenyl diphosphate. Asp-120 and Asp-124 together coordinate Mg(2+). A dimethylallyl diphosphate-binding site is contributed by Arg-129. Arg-130 lines the isopentenyl diphosphate pocket. Lys-207, Thr-208, and Gln-244 together coordinate dimethylallyl diphosphate. Residue Asp-247 participates in Mg(2+) binding. Dimethylallyl diphosphate is bound by residues Asn-251, Lys-261, and Lys-271.

The protein belongs to the FPP/GGPP synthase family. Mg(2+) serves as cofactor.

The enzyme catalyses isopentenyl diphosphate + dimethylallyl diphosphate = (2E)-geranyl diphosphate + diphosphate. It carries out the reaction isopentenyl diphosphate + (2E)-geranyl diphosphate = (2E,6E)-farnesyl diphosphate + diphosphate. It catalyses the reaction isopentenyl diphosphate + (2E,6E)-farnesyl diphosphate = (2E,6E,10E)-geranylgeranyl diphosphate + diphosphate. Geranylgeranyl pyrophosphate synthase; part of the gene cluster 25 that mediates the biosynthesis of an isoprenoid secondary metabolite. The chain is Geranylgeranyl pyrophosphate synthase 3 (GGS3) from Zymoseptoria tritici (strain CBS 115943 / IPO323) (Speckled leaf blotch fungus).